We begin with the raw amino-acid sequence, 309 residues long: Glutaminase (309 aa).

Substrate contacts are provided by Ser64, Asn114, Glu160, Asn167, Tyr191, Tyr243, and Val261.

The protein belongs to the glutaminase family. As to quaternary structure, homotetramer.

It catalyses the reaction L-glutamine + H2O = L-glutamate + NH4(+). In Rhizobium leguminosarum bv. trifolii (strain WSM2304), this protein is Glutaminase.